Reading from the N-terminus, the 274-residue chain is Putative pyruvate, phosphate dikinase regulatory protein (274 aa).

Residue 151 to 158 participates in ADP binding; sequence GVSRTSKT.

Belongs to the pyruvate, phosphate/water dikinase regulatory protein family. PDRP subfamily.

It catalyses the reaction N(tele)-phospho-L-histidyl/L-threonyl-[pyruvate, phosphate dikinase] + ADP = N(tele)-phospho-L-histidyl/O-phospho-L-threonyl-[pyruvate, phosphate dikinase] + AMP + H(+). The catalysed reaction is N(tele)-phospho-L-histidyl/O-phospho-L-threonyl-[pyruvate, phosphate dikinase] + phosphate + H(+) = N(tele)-phospho-L-histidyl/L-threonyl-[pyruvate, phosphate dikinase] + diphosphate. Functionally, bifunctional serine/threonine kinase and phosphorylase involved in the regulation of the pyruvate, phosphate dikinase (PPDK) by catalyzing its phosphorylation/dephosphorylation. This Pelagibacter ubique (strain HTCC1062) protein is Putative pyruvate, phosphate dikinase regulatory protein.